Consider the following 129-residue polypeptide: Phosphoribosyl-AMP cyclohydrolase (129 aa).

Asp-84 is a Mg(2+) binding site. Residue Cys-85 participates in Zn(2+) binding. Mg(2+)-binding residues include Asp-86 and Asp-88. Zn(2+) is bound by residues Cys-101 and Cys-108.

Belongs to the PRA-CH family. As to quaternary structure, homodimer. Mg(2+) is required as a cofactor. It depends on Zn(2+) as a cofactor.

The protein resides in the cytoplasm. It carries out the reaction 1-(5-phospho-beta-D-ribosyl)-5'-AMP + H2O = 1-(5-phospho-beta-D-ribosyl)-5-[(5-phospho-beta-D-ribosylamino)methylideneamino]imidazole-4-carboxamide. The protein operates within amino-acid biosynthesis; L-histidine biosynthesis; L-histidine from 5-phospho-alpha-D-ribose 1-diphosphate: step 3/9. Functionally, catalyzes the hydrolysis of the adenine ring of phosphoribosyl-AMP. The chain is Phosphoribosyl-AMP cyclohydrolase from Halobacterium salinarum (strain ATCC 700922 / JCM 11081 / NRC-1) (Halobacterium halobium).